Consider the following 736-residue polypeptide: Ethylene receptor 2 (736 aa).

3 consecutive transmembrane segments (helical) span residues 22–42, 53–73, and 94–114; these read ISDF…VYFV, VLVQ…INLW, and AAVS…LLSV. Positions 64 and 68 each coordinate Cu cation. Positions 157 to 305 constitute a GAF domain; that stretch reads DRHTILKTTL…VVADQVAVAL (149 aa). Positions 348 to 585 constitute a Histidine kinase domain; the sequence is VMNHEMRTPM…TAIFIVKLGI (238 aa). Position 351 is a phosphohistidine; by autocatalysis (His-351). Residues 613-730 enclose the Response regulatory domain; sequence KVLVMDDNGF…KMRSVLSGLL (118 aa). Position 661 is a 4-aspartylphosphate (Asp-661).

This sequence belongs to the ethylene receptor family. As to quaternary structure, homodimer; disulfide-linked. It depends on Cu cation as a cofactor. Activation probably requires a transfer of a phosphate group between a His in the transmitter domain and an Asp of the receiver domain. As to expression, leaves, flowers and fruits.

The protein resides in the endoplasmic reticulum membrane. It catalyses the reaction ATP + protein L-histidine = ADP + protein N-phospho-L-histidine.. Functionally, may act early in the ethylene signal transduction pathway, possibly as an ethylene receptor, or as a regulator of the pathway. The polypeptide is Ethylene receptor 2 (ETR2) (Solanum lycopersicum (Tomato)).